A 118-amino-acid chain; its full sequence is Large ribosomal subunit protein bL19 (118 aa).

The protein belongs to the bacterial ribosomal protein bL19 family.

Functionally, this protein is located at the 30S-50S ribosomal subunit interface and may play a role in the structure and function of the aminoacyl-tRNA binding site. The chain is Large ribosomal subunit protein bL19 from Salinibacter ruber (strain DSM 13855 / M31).